The sequence spans 103 residues: Large ribosomal subunit protein bL21 (103 aa).

The protein belongs to the bacterial ribosomal protein bL21 family. Part of the 50S ribosomal subunit. Contacts protein L20.

Its function is as follows. This protein binds to 23S rRNA in the presence of protein L20. The chain is Large ribosomal subunit protein bL21 from Polynucleobacter asymbioticus (strain DSM 18221 / CIP 109841 / QLW-P1DMWA-1) (Polynucleobacter necessarius subsp. asymbioticus).